Consider the following 92-residue polypeptide: Probable acyl carrier protein (92 aa).

In terms of domain architecture, Carrier spans 11–92 (QVTFEELSAL…QVNATLRTAV (82 aa)). S49 carries the O-(pantetheine 4'-phosphoryl)serine modification.

4'-phosphopantetheine is transferred from CoA to a specific serine of the apo-ACP-like protein.

Its function is as follows. Involved in developmentally regulated synthesis of a compound biosynthetically related to polyketide antibiotics which is essential for spore color in Streptomyces halstedii. This chain is Probable acyl carrier protein (sch3), found in Streptomyces halstedii.